A 375-amino-acid chain; its full sequence is Actin, cytoplasmic (375 aa).

This sequence belongs to the actin family.

The protein localises to the cytoplasm. It is found in the cytoskeleton. The enzyme catalyses ATP + H2O = ADP + phosphate + H(+). In terms of biological role, actins are highly conserved proteins that are involved in various types of cell motility and are ubiquitously expressed in all eukaryotic cells. This is Actin, cytoplasmic from Oxytricha trifallax (Sterkiella histriomuscorum).